Consider the following 477-residue polypeptide: Transposase for insertion sequence element IS231F (477 aa).

It belongs to the transposase 11 family.

In terms of biological role, involved in the transposition of the insertion sequence. This chain is Transposase for insertion sequence element IS231F, found in Bacillus thuringiensis subsp. israelensis.